A 479-amino-acid polypeptide reads, in one-letter code: 5-hydroxytryptamine receptor 7 (479 aa).

The Extracellular portion of the chain corresponds to 1-83 (MMDVNSSGRP…INYGRVEKVV (83 aa)). N-linked (GlcNAc...) asparagine glycans are attached at residues Asn-5 and Asn-66. The helical transmembrane segment at 84–108 (IGSILTLITLLTIAGNCLVVISVCF) threads the bilayer. The Cytoplasmic segment spans residues 109-118 (VKKLRQPSNY). The helical transmembrane segment at 119-140 (LIVSLALADLSVAVAVMPFVSV) threads the bilayer. The Extracellular segment spans residues 141–152 (TDLIGGKWIFGH). Residues 153-178 (FFCNVFIAMDVMCCTASIMTLCVISI) form a helical membrane-spanning segment. Cys-155 and Cys-231 are disulfide-bonded. Position 162 (Asp-162) interacts with serotonin. Residues 179–198 (DRYLGITRPLTYPVRQNGKC) are Cytoplasmic-facing. Residues 199–219 (MAKMILSVWLLSASITLPPLF) form a helical membrane-spanning segment. Residues 220–237 (GWAQNVNDDKVCLISQDF) lie on the Extracellular side of the membrane. The helical transmembrane segment at 238–260 (GYTIYSTAVAFYIPMSVMLFMYY) threads the bilayer. Over 261 to 326 (QIYKAARKSA…SIFKREQKAA (66 aa)) the chain is Cytoplasmic. Residues 327–352 (TTLGIIVGAFTVCWLPFFLLSTARPF) traverse the membrane as a helical segment. Topologically, residues 353 to 363 (ICGTSCSCIPL) are extracellular. Residues 364–387 (WVERTFLWLGYANSLINPFIYAFF) form a helical membrane-spanning segment. Over 388 to 479 (NRDLRTTYRS…TVEKKVMIHD (92 aa)) the chain is Cytoplasmic. The S-palmitoyl cysteine moiety is linked to residue Cys-401.

It belongs to the G-protein coupled receptor 1 family. In terms of tissue distribution, predominant isoform in spleen, caudate and hippocampus. Expressed at lower levels. As to expression, minor isoform in terms of expression.

It localises to the cell membrane. Its function is as follows. G-protein coupled receptor for 5-hydroxytryptamine (serotonin), a biogenic hormone that functions as a neurotransmitter, a hormone and a mitogen. Ligand binding causes a conformation change that triggers signaling via guanine nucleotide-binding proteins (G proteins) and modulates the activity of downstream effectors. HTR7 is coupled to G(s) G alpha proteins and mediates activation of adenylate cyclase activity. This chain is 5-hydroxytryptamine receptor 7, found in Homo sapiens (Human).